The sequence spans 97 residues: uncharacterized protein (97 aa).

A run of 3 helical transmembrane segments spans residues 5 to 25, 49 to 71, and 75 to 92; these read INYLLIVIALLFFVVAYFVGI, IAGYFFLNSGLFILLNSFISFQG, and LIPPLILAYGAGVIIYVN.

The protein resides in the cell membrane. This is an uncharacterized protein from Bacillus subtilis (strain 168).